Reading from the N-terminus, the 409-residue chain is Peptidase T (409 aa).

Position 79 (His79) interacts with Zn(2+). Asp81 is an active-site residue. Asp140 contributes to the Zn(2+) binding site. Glu174 functions as the Proton acceptor in the catalytic mechanism. Residues Glu175, Asp197, and His379 each contribute to the Zn(2+) site.

This sequence belongs to the peptidase M20B family. Zn(2+) serves as cofactor.

Its subcellular location is the cytoplasm. It catalyses the reaction Release of the N-terminal residue from a tripeptide.. Its function is as follows. Cleaves the N-terminal amino acid of tripeptides. This chain is Peptidase T, found in Lysinibacillus sphaericus (strain C3-41).